The chain runs to 337 residues: D-alanine--D-alanine ligase (337 aa).

In terms of domain architecture, ATP-grasp spans 124-330 (KMWFSALGIP…FTEYLSLVIN (207 aa)). 154-209 (ALANWGSIFIKAASQGSSVGCYKVDDSSKVAQVLKDAFGYAPYVVVEKTIKARELE) lines the ATP pocket. Mg(2+) contacts are provided by aspartate 284, glutamate 297, and asparagine 299.

This sequence belongs to the D-alanine--D-alanine ligase family. Requires Mg(2+) as cofactor. It depends on Mn(2+) as a cofactor.

The protein localises to the cytoplasm. It carries out the reaction 2 D-alanine + ATP = D-alanyl-D-alanine + ADP + phosphate + H(+). It functions in the pathway cell wall biogenesis; peptidoglycan biosynthesis. Its function is as follows. Cell wall formation. The chain is D-alanine--D-alanine ligase from Shewanella putrefaciens (strain CN-32 / ATCC BAA-453).